We begin with the raw amino-acid sequence, 312 residues long: Olfactory receptor 2L13 (312 aa).

Over 1-24 (MEKWNHTSNDFILLGLLPPNQTGI) the chain is Extracellular. Residues Asn5 and Asn20 are each glycosylated (N-linked (GlcNAc...) asparagine). Residues 25 to 48 (FLLCLIILIFFLASVGNSAMIHLI) form a helical membrane-spanning segment. Residues 49–56 (HVDPRLHT) are Cytoplasmic-facing. The helical transmembrane segment at 57-78 (PMYFLLSQLSLMDLMYISTTVP) threads the bilayer. At 79-99 (KMAYNFLSGQKGISFLGCGVQ) the chain is on the extracellular side. Cys96 and Cys188 are oxidised to a cystine. The helical transmembrane segment at 100–119 (SFFFLTMACSEGLLLTSMAY) threads the bilayer. At 120–138 (DRYLAICHSLYYPIRMSKM) the chain is on the cytoplasmic side. The chain crosses the membrane as a helical span at residues 139 to 157 (MCVKMIGGSWTLGSINSLA). Residues 158–194 (HTVFALHIPYCRSRAIDHFFCDVPAMLLLACTDTWVY) are Extracellular-facing. A helical transmembrane segment spans residues 195–218 (EYMVFVSTSLFLLFPFIGITSSCG). Residues 219–235 (RVLFAVYHMHSKEGRKK) lie on the Cytoplasmic side of the membrane. A helical membrane pass occupies residues 236 to 258 (AFTTISTHLTVVIFYYAPFVYTY). The Extracellular segment spans residues 259 to 271 (LRPRNLRSPAEDK). A helical transmembrane segment spans residues 272-291 (ILAVFYTILTPMLNPIIYSL). At 292–312 (RNKEVLGAMRRVFGIFSFLKE) the chain is on the cytoplasmic side.

This sequence belongs to the G-protein coupled receptor 1 family.

Its subcellular location is the cell membrane. Its function is as follows. Odorant receptor. The chain is Olfactory receptor 2L13 (OR2L13) from Homo sapiens (Human).